Here is a 148-residue protein sequence, read N- to C-terminus: Holo-[acyl-carrier-protein] synthase (148 aa).

Asp9 and Glu63 together coordinate Mg(2+).

This sequence belongs to the P-Pant transferase superfamily. AcpS family. It depends on Mg(2+) as a cofactor.

It is found in the cytoplasm. The catalysed reaction is apo-[ACP] + CoA = holo-[ACP] + adenosine 3',5'-bisphosphate + H(+). In terms of biological role, transfers the 4'-phosphopantetheine moiety from coenzyme A to a Ser of acyl-carrier-protein. The chain is Holo-[acyl-carrier-protein] synthase from Burkholderia cenocepacia (strain HI2424).